A 604-amino-acid polypeptide reads, in one-letter code: FAD-linked oxidoreductase easE (604 aa).

Positions 1–25 (MQFLLWSTGLVALLSWLIYTQETQS) are cleaved as a signal peptide. N-linked (GlcNAc...) asparagine glycans are attached at residues Asn-47, Asn-70, Asn-106, and Asn-196. The region spanning 125 to 308 (QGRIPLFTVG…TRATMRVFPD (184 aa)) is the FAD-binding PCMH-type domain.

It belongs to the oxygen-dependent FAD-linked oxidoreductase family. Requires FAD as cofactor.

Its pathway is alkaloid biosynthesis; ergot alkaloid biosynthesis. FAD-linked oxidoreductase; part of the gene cluster that mediates the biosynthesis of fungal ergot alkaloid. DmaW catalyzes the first step of ergot alkaloid biosynthesis by condensing dimethylallyl diphosphate (DMAP) and tryptophan to form 4-dimethylallyl-L-tryptophan. The second step is catalyzed by the methyltransferase easF that methylates 4-dimethylallyl-L-tryptophan in the presence of S-adenosyl-L-methionine, resulting in the formation of 4-dimethylallyl-L-abrine. The catalase easC and the FAD-dependent oxidoreductase easE then transform 4-dimethylallyl-L-abrine to chanoclavine-I which is further oxidized by easD in the presence of NAD(+), resulting in the formation of chanoclavine-I aldehyde. Chanoclavine-I aldehyde is the precursor of ergoamides and ergopeptines in Clavicipitaceae, and clavine-type alcaloids such as fumiclavine in Trichocomaceae. However, the metabolites downstream of chanoclavine-I aldehyde in Arthrodermataceae have not been identified yet. The sequence is that of FAD-linked oxidoreductase easE from Trichophyton verrucosum (strain HKI 0517).